We begin with the raw amino-acid sequence, 299 residues long: ATP phosphoribosyltransferase (299 aa).

The protein belongs to the ATP phosphoribosyltransferase family. Long subfamily. Requires Mg(2+) as cofactor.

It localises to the cytoplasm. It catalyses the reaction 1-(5-phospho-beta-D-ribosyl)-ATP + diphosphate = 5-phospho-alpha-D-ribose 1-diphosphate + ATP. It functions in the pathway amino-acid biosynthesis; L-histidine biosynthesis; L-histidine from 5-phospho-alpha-D-ribose 1-diphosphate: step 1/9. Feedback inhibited by histidine. Functionally, catalyzes the condensation of ATP and 5-phosphoribose 1-diphosphate to form N'-(5'-phosphoribosyl)-ATP (PR-ATP). Has a crucial role in the pathway because the rate of histidine biosynthesis seems to be controlled primarily by regulation of HisG enzymatic activity. The sequence is that of ATP phosphoribosyltransferase from Campylobacter jejuni subsp. jejuni serotype O:23/36 (strain 81-176).